Consider the following 602-residue polypeptide: Elongation factor 4 (602 aa).

Positions 7 to 189 constitute a tr-type G domain; the sequence is KYIRNFSIVA…AIVSKVPAPY (183 aa). Residues 19–24 and 136–139 each bind GTP; these read DHGKST and NKID.

It belongs to the TRAFAC class translation factor GTPase superfamily. Classic translation factor GTPase family. LepA subfamily.

It localises to the cell membrane. It carries out the reaction GTP + H2O = GDP + phosphate + H(+). Its function is as follows. Required for accurate and efficient protein synthesis under certain stress conditions. May act as a fidelity factor of the translation reaction, by catalyzing a one-codon backward translocation of tRNAs on improperly translocated ribosomes. Back-translocation proceeds from a post-translocation (POST) complex to a pre-translocation (PRE) complex, thus giving elongation factor G a second chance to translocate the tRNAs correctly. Binds to ribosomes in a GTP-dependent manner. This is Elongation factor 4 from Clostridium botulinum (strain Loch Maree / Type A3).